Here is a 443-residue protein sequence, read N- to C-terminus: Phenylalanine--tRNA ligase alpha subunit (443 aa).

L-phenylalanine-binding positions include Thr332, 375-377 (QVE), and Tyr415. Residue Glu417 participates in Mg(2+) binding. Residue Phe441 coordinates L-phenylalanine.

The protein belongs to the class-II aminoacyl-tRNA synthetase family. Phe-tRNA synthetase alpha subunit type 2 subfamily. In terms of assembly, heterotetramer; dimer of two heterodimers formed by FARSA and FARSB. The cofactor is Mg(2+).

It is found in the cytoplasm. It catalyses the reaction tRNA(Phe) + L-phenylalanine + ATP = L-phenylalanyl-tRNA(Phe) + AMP + diphosphate + H(+). The protein is Phenylalanine--tRNA ligase alpha subunit (FARSA) of Gallus gallus (Chicken).